The sequence spans 511 residues: Maturase K (511 aa).

It belongs to the intron maturase 2 family. MatK subfamily.

Its subcellular location is the plastid. It localises to the chloroplast. Functionally, usually encoded in the trnK tRNA gene intron. Probably assists in splicing its own and other chloroplast group II introns. This Bowiea volubilis (Climbing onion) protein is Maturase K.